A 130-amino-acid polypeptide reads, in one-letter code: Small ribosomal subunit protein uS9 (130 aa).

This sequence belongs to the universal ribosomal protein uS9 family.

This is Small ribosomal subunit protein uS9 from Sodalis glossinidius (strain morsitans).